A 192-amino-acid chain; its full sequence is Adapter protein MecA (192 aa).

Belongs to the MecA family. As to quaternary structure, homodimer.

Its function is as follows. Enables the recognition and targeting of unfolded and aggregated proteins to the ClpC protease or to other proteins involved in proteolysis. Acts negatively in the development of competence by binding ComK and recruiting it to the ClpCP protease. When overexpressed, inhibits sporulation. Also involved in Spx degradation by ClpC. The protein is Adapter protein MecA of Oceanobacillus iheyensis (strain DSM 14371 / CIP 107618 / JCM 11309 / KCTC 3954 / HTE831).